A 244-amino-acid polypeptide reads, in one-letter code: EEF1A lysine methyltransferase 2 (244 aa).

The disordered stretch occupies residues 1 to 27 (MNADAEGHSGAVVPAQSPEGSSAADDF). Ser-21 is subject to Phosphoserine.

The protein belongs to the class I-like SAM-binding methyltransferase superfamily. EFM4 family.

Its subcellular location is the cytoplasm. The protein resides in the nucleus. It carries out the reaction L-lysyl-[protein] + 3 S-adenosyl-L-methionine = N(6),N(6),N(6)-trimethyl-L-lysyl-[protein] + 3 S-adenosyl-L-homocysteine + 3 H(+). In terms of biological role, protein-lysine methyltransferase that selectively catalyzes the trimethylation of EEF1A at 'Lys-318'. In Mus musculus (Mouse), this protein is EEF1A lysine methyltransferase 2.